The primary structure comprises 101 residues: Urease subunit beta (101 aa).

The protein belongs to the urease beta subunit family. In terms of assembly, heterotrimer of UreA (gamma), UreB (beta) and UreC (alpha) subunits. Three heterotrimers associate to form the active enzyme.

Its subcellular location is the cytoplasm. The enzyme catalyses urea + 2 H2O + H(+) = hydrogencarbonate + 2 NH4(+). Its pathway is nitrogen metabolism; urea degradation; CO(2) and NH(3) from urea (urease route): step 1/1. In Hahella chejuensis (strain KCTC 2396), this protein is Urease subunit beta.